Reading from the N-terminus, the 165-residue chain is MNIKENDLPGIGKKFEIETRSHEKMTIIIHDDGRREIYRFNDRDPDELLSNISLDDSEARQIAAILGGMVYKPQALESIEMAFSDLIIEWFKVEKGAKSIGRTLGELDVRQNYDVTVIAIIKHNQEKLLNPGADSIIEENDTLVLSGERKHLKKLIHDFLSGEGV.

An RCK C-terminal domain is found at 76–161 (LESIEMAFSD…LKKLIHDFLS (86 aa)).

In terms of assembly, the transporter is composed of the integral membrane protein KhtU and the regulatory protein KhtT.

The protein resides in the cell membrane. With respect to regulation, binds cyclic di-AMP (c-di-AMP), which may regulate the activity. Functionally, required for activity of the potassium/proton antiporter KhtU. Involved in protection of the cell from methylglyoxal, a toxic by-product of glycolysis. The chain is K(+)/H(+) antiporter subunit KhtT from Bacillus subtilis (strain 168).